A 501-amino-acid polypeptide reads, in one-letter code: MIMLIKVFVLLLVVYILHNSYKKYKKLDKNELKGPTPIPVLGNLHQLSSLPHRDLSKMTKDYGDIFRVWFADLYTVVISDPVLIRKIYVENHESFRDRPKIPSMKYGTYYHGTAASMGEDWVRNRGIVSSAMRKSNIKHIYEVINNQVDVLMSTMKKYEKRSEPFEPRYYMTKYTMAAMFKYIFNEDIGEDEDIHTGEIQKIMGPMNQVMEDFGTGSLFDVLEISQTFYLKWLELTEKNFPLLLKFFNGRYEQHLETIKPESPRDLLDILINEYGTNTHDDYLNIASTVLDFFFAGTDTSSTTLEYLFLMMANYPEIQDKVHQEVKSYLKQIGKDKVELNDRQSLPYVVAVIKETLRFKPVTPFGVPRSCVNEITIDEKYFIPKGAQVIINYPSIFENEKYFKNANQFDPSRFLQTTTTNTASNEESSFNSNLAFIPFSIGPRNCVGMQFAQDELFLAFANIVLNFTIKSVDGKKIDETISYGVTLKPKTRFKVLLEKRLI.

The chain crosses the membrane as a helical span at residues 1-21; that stretch reads MIMLIKVFVLLLVVYILHNSY. C445 contributes to the heme binding site.

Belongs to the cytochrome P450 family. Requires heme as cofactor.

Its subcellular location is the membrane. This is Probable cytochrome P450 508A4 (cyp508A4) from Dictyostelium discoideum (Social amoeba).